We begin with the raw amino-acid sequence, 117 residues long: Calcitonin receptor-stimulating peptide 2 (117 aa).

The first 25 residues, 1-25 (MGFWKFPPFLVLSILVLYQAGMFHT), serve as a signal peptide directing secretion. A propeptide spanning residues 26–79 (APVRLPLESSFDSATLTEEEVSLLLVAMVKDYVQMKATVLEQESEDFSITAQEK) is cleaved from the precursor. The cysteines at positions 81 and 86 are disulfide-linked.

Belongs to the calcitonin family. In terms of tissue distribution, mainly expressed in the thyroid gland and CNS. Found in the nerve cells of the cerebrum, hippocampus, hypothalamus, pons/midbrain and thalamus. Also detected in the glia-like cells of pons/midbrain and in meninx of tactus opticus.

The protein localises to the secreted. This Sus scrofa (Pig) protein is Calcitonin receptor-stimulating peptide 2 (CRSP2).